Here is a 189-residue protein sequence, read N- to C-terminus: dCTP deaminase (189 aa).

Residues 112–117, 136–138, glutamine 157, tyrosine 171, and glutamine 181 each bind dCTP; these read KSTYAR and TLE. Glutamate 138 (proton donor/acceptor) is an active-site residue.

The protein belongs to the dCTP deaminase family. Homotrimer.

It carries out the reaction dCTP + H2O + H(+) = dUTP + NH4(+). It participates in pyrimidine metabolism; dUMP biosynthesis; dUMP from dCTP (dUTP route): step 1/2. In terms of biological role, catalyzes the deamination of dCTP to dUTP. The chain is dCTP deaminase from Albidiferax ferrireducens (strain ATCC BAA-621 / DSM 15236 / T118) (Rhodoferax ferrireducens).